A 234-amino-acid polypeptide reads, in one-letter code: Iron-sulfur cluster co-chaperone protein HscB (234 aa).

4 residues coordinate a divalent metal cation: cysteine 40, cysteine 43, cysteine 57, and cysteine 60. A J domain is found at 71–143; the sequence is DYFSLMNCNR…LTRGLYLLKL (73 aa).

The protein belongs to the HscB family. As to quaternary structure, interacts with ISCU and HSPA9 to form an iron-sulfur transfer complex. Interacts with SDHAF1 (via the first LYR motif); the interaction recruits the iron-sulfur transfer complex composed of HSC20, HSPA9 and ISCU and mediates the incorporation of iron-sulfur clusters into SDHB which also interacts with HSC20. Interacts with the cytoplasmic form of ISCU and with CIA complex member CIAO1 (via LYR motif). In terms of assembly, homodimer. Interacts with ISCU (cytoplasmic form); this interaction stabilizes the (Fe-S) clusters on ISCU. Interacts with the CIA complex member CIAO1 (via LYR motif).

Its subcellular location is the cytoplasm. It is found in the mitochondrion. Its pathway is cofactor biosynthesis; iron-sulfur cluster biosynthesis. Functionally, acts as a co-chaperone in iron-sulfur cluster assembly in mitochondria. Required for incorporation of iron-sulfur clusters into SDHB, the iron-sulfur protein subunit of succinate dehydrogenase that is involved in complex II of the mitochondrial electron transport chain. Recruited to SDHB by interaction with SDHAF1 which first binds SDHB and then recruits the iron-sulfur transfer complex formed by HSC20, HSPA9 and ISCU through direct binding to HSC20. Plays an essential role in hematopoiesis. In terms of biological role, acts as a co-chaperone in iron-sulfur cluster assembly in the cytoplasm. Also mediates complex formation between components of the cytosolic iron-sulfur biogenesis pathway and the CIA targeting complex composed of CIAO1, DIPK1B/FAM69B and MMS19 by binding directly to the scaffold protein ISCU and to CIAO1. This facilitates iron-sulfur cluster insertion into a number of cytoplasmic and nuclear proteins including POLD1, ELP3, DPYD and PPAT. The polypeptide is Iron-sulfur cluster co-chaperone protein HscB (Mus musculus (Mouse)).